The following is a 227-amino-acid chain: 7-cyano-7-deazaguanine synthase (227 aa).

ATP is bound at residue 8–18 (LSGGLDSATVL). Zn(2+)-binding residues include Cys191, Cys201, Cys204, and Cys207.

This sequence belongs to the QueC family. Requires Zn(2+) as cofactor.

It carries out the reaction 7-carboxy-7-deazaguanine + NH4(+) + ATP = 7-cyano-7-deazaguanine + ADP + phosphate + H2O + H(+). Its pathway is purine metabolism; 7-cyano-7-deazaguanine biosynthesis. Functionally, catalyzes the ATP-dependent conversion of 7-carboxy-7-deazaguanine (CDG) to 7-cyano-7-deazaguanine (preQ(0)). The sequence is that of 7-cyano-7-deazaguanine synthase from Paramagnetospirillum magneticum (strain ATCC 700264 / AMB-1) (Magnetospirillum magneticum).